The sequence spans 35 residues: Kappa-stichotoxin-She3a (35 aa).

The region spanning 3–35 (CIDTIPKSRCTAFQCKHSMKYRLSFCRKTCGTC) is the ShKT domain. Cystine bridges form between Cys-3-Cys-35, Cys-12-Cys-28, and Cys-17-Cys-32.

Belongs to the sea anemone type 1 potassium channel toxin family. Type 1a subfamily.

It localises to the secreted. The protein resides in the nematocyst. Peptide with both antimicrobial and neurotoxin activities. Inhibits voltage-dependent potassium channels. Potently blocks Kv1.1/KCNA1 (IC(50)=6.7-87 pM) and Kv1.3/KCNA3 (IC(50)=10-250 pM). Less potently blocks Kv1.4/KCNA4 (IC(50)=0.31 nM), and Kv1.6/KCNA6 (IC(50)=0.16 nM). Shows moderate activity on Kv1.2/KCNA2 (IC(50)=9 nM), Kv1.7/KCNA7 (IC(50)=11.5 nM), and KCa3.1/KCNN4 (Kd=0.03-30 nM). Blocks Kv channels by binding to a shallow vestibule at the outer entrance to the ion conduction pathway and occluding the entrance to the pore. Shows antibacterial activity against all tested bacteria (the Gram-positive bacteria B.subtilis and S.aureus, and the Gram-negative bacteria S.typhimurium and P.aeruginosa). The chain is Kappa-stichotoxin-She3a from Stichodactyla helianthus (Sun anemone).